A 930-amino-acid chain; its full sequence is Isoleucine--tRNA ligase (930 aa).

Residues 57–67 carry the 'HIGH' region motif; that stretch reads PYANGNIHVGH. E554 provides a ligand contact to L-isoleucyl-5'-AMP. Positions 595 to 599 match the 'KMSKS' region motif; sequence KMSKS. K598 serves as a coordination point for ATP. Zn(2+)-binding residues include C888, C891, C908, and C911.

The protein belongs to the class-I aminoacyl-tRNA synthetase family. IleS type 1 subfamily. As to quaternary structure, monomer. Zn(2+) serves as cofactor.

It is found in the cytoplasm. It carries out the reaction tRNA(Ile) + L-isoleucine + ATP = L-isoleucyl-tRNA(Ile) + AMP + diphosphate. In terms of biological role, catalyzes the attachment of isoleucine to tRNA(Ile). As IleRS can inadvertently accommodate and process structurally similar amino acids such as valine, to avoid such errors it has two additional distinct tRNA(Ile)-dependent editing activities. One activity is designated as 'pretransfer' editing and involves the hydrolysis of activated Val-AMP. The other activity is designated 'posttransfer' editing and involves deacylation of mischarged Val-tRNA(Ile). This chain is Isoleucine--tRNA ligase, found in Streptococcus pneumoniae (strain Taiwan19F-14).